Consider the following 807-residue polypeptide: G-type lectin S-receptor-like serine/threonine-protein kinase At1g61420 (807 aa).

Positions 1-24 (MGKKWIVFFAYLLLSSFFISSSSA) are cleaved as a signal peptide. A Bulb-type lectin domain is found at 25 to 144 (GITKESPLPI…FSGRTLWQSF (120 aa)). Over 25–426 (GITKESPLPI…ELGGNKRKKA (402 aa)) the chain is Extracellular. Residues N53, N94, N117, N134, N236, and N267 are each glycosylated (N-linked (GlcNAc...) asparagine). One can recognise an EGF-like; atypical domain in the interval 278 to 314 (PEHSCDYYGVCGPFGLCVKSVPPKCTCFKGFVPKLIE). 2 cysteine pairs are disulfide-bonded: C282/C294 and C288/C302. 3 N-linked (GlcNAc...) asparagine glycosylation sites follow: N320, N336, and N375. The 81-residue stretch at 333–413 (CQGNSTGKYA…EGGELLSIRL (81 aa)) folds into the PAN domain. 2 disulfide bridges follow: C368-C389 and C372-C378. Residues 427-447 (ITASIVSLSLVVIIAFVAFCF) traverse the membrane as a helical segment. Residues 448 to 807 (WRYRVKHNAD…EMTKSVILGR (360 aa)) lie on the Cytoplasmic side of the membrane. The Protein kinase domain occupies 494 to 779 (FSISNKLGQG…DLPPPEQPTF (286 aa)). ATP-binding positions include 500-508 (LGQGGFGPV) and K522. Phosphoserine occurs at positions 528 and 543. The caM-binding stretch occupies residues 583–600 (RKRLEIDWPKRLDIIQGI). D619 serves as the catalytic Proton acceptor. Phosphoserine is present on residues S623 and S636. T653 bears the Phosphothreonine mark. Phosphoserine is present on residues S696 and S790.

Belongs to the protein kinase superfamily. Ser/Thr protein kinase family.

It localises to the cell membrane. The enzyme catalyses L-seryl-[protein] + ATP = O-phospho-L-seryl-[protein] + ADP + H(+). The catalysed reaction is L-threonyl-[protein] + ATP = O-phospho-L-threonyl-[protein] + ADP + H(+). The protein is G-type lectin S-receptor-like serine/threonine-protein kinase At1g61420 of Arabidopsis thaliana (Mouse-ear cress).